The primary structure comprises 397 residues: F-box protein At5g25290 (397 aa).

The region spanning 11-56 (VTLWSEIPMDILRSVFERLSFVDLHRAKIVCSHWYSCSKQSFLRKT) is the F-box domain.

The sequence is that of F-box protein At5g25290 from Arabidopsis thaliana (Mouse-ear cress).